A 528-amino-acid chain; its full sequence is Chaperonin GroEL, chloroplastic (528 aa).

Residues 29 to 32, 86 to 90, G415, 481 to 483, and D497 contribute to the ATP site; these read TLGP, DGTTT, and NAA.

The protein belongs to the chaperonin (HSP60) family. As to quaternary structure, forms a cylinder of 14 subunits composed of two heptameric rings stacked back-to-back. Interacts with the co-chaperonin GroES.

It localises to the plastid. Its subcellular location is the chloroplast. It catalyses the reaction ATP + H2O + a folded polypeptide = ADP + phosphate + an unfolded polypeptide.. Its function is as follows. Together with its co-chaperonin GroES, plays an essential role in assisting protein folding. The GroEL-GroES system forms a nano-cage that allows encapsulation of the non-native substrate proteins and provides a physical environment optimized to promote and accelerate protein folding. The chain is Chaperonin GroEL, chloroplastic from Trieres chinensis (Marine centric diatom).